Consider the following 1505-residue polypeptide: G patch domain-containing protein 8 (1505 aa).

Positions 40 to 86 (SDNIGHRLLQKHGWKLGQGLGKSLQGRTDPIPIVVKYDVMGMGRMEM) constitute a G-patch domain. Residues 89 to 124 (DYAEDATERRRVLEVEKEDTEELRQKYKDYVDKEKA) adopt a coiled-coil conformation. A C2H2-type zinc finger spans residues 136-160 (FYCELCDKQYQKHQEFDNHINSYDH). Composition is skewed to basic and acidic residues over residues 166-175 (LKDLKQREFA) and 182-206 (SRKD…RKQA). Residues 166–244 (LKDLKQREFA…SSTNSGASAV (79 aa)) form a disordered region. Positions 223-233 (VDEDGGEEDKD) are enriched in acidic residues. K311 is covalently cross-linked (Glycyl lysine isopeptide (Lys-Gly) (interchain with G-Cter in SUMO2)). Composition is skewed to basic and acidic residues over residues 322 to 339 (HAEE…EKSS) and 421 to 436 (EGDH…ENRK). Disordered stretches follow at residues 322-393 (HAEE…EPEY) and 419-537 (QMEG…FPVL). A compositionally biased stretch (polar residues) spans 437–449 (SSSPKPQGCSKTA). K479 carries the post-translational modification N6-acetyllysine. K573 is covalently cross-linked (Glycyl lysine isopeptide (Lys-Gly) (interchain with G-Cter in SUMO2)). Basic and acidic residues-rich tracts occupy residues 575–612 (SRNK…KSQE) and 648–665 (SETE…EPSG). Positions 575 to 1304 (SRNKDAKAKG…ESTDGTEDAS (730 aa)) are disordered. S648 is subject to Phosphoserine. The span at 666–687 (KSHRHKKKKKHKKSSKHKRKHK) shows a compositional bias: basic residues. Positions 688–702 (ADTEEKSSKAESGEK) are enriched in basic and acidic residues. Over residues 703–715 (SKKRKKRKRKKNK) the composition is skewed to basic residues. Phosphoserine is present on residues S733, S735, and S753. Over residues 745 to 767 (AQDDSQRRSLPAEEGNSGKKDDG) the composition is skewed to basic and acidic residues. Positions 794–804 (ANTKHSSRSSH) are enriched in basic residues. Over residues 832–849 (SEEEEEEEEEEEEEDEDS) the composition is skewed to acidic residues. The segment covering 856–871 (SRSRSGHRHSSHRSSR) has biased composition (basic residues). Low complexity predominate over residues 872 to 900 (RSYSSSSDASSDQSCYSRQHSYSDDSYSD). Phosphoserine is present on residues S915 and S918. Residues 923–932 (SKHRSKRHKY) are compositionally biased toward basic residues. A phosphoserine mark is found at S985, S1013, S1018, S1037, and S1039. Positions 1017–1031 (ESPEERRSGRRDFIR) are enriched in basic and acidic residues. Positions 1050 to 1063 (GPGKKEDGRGDDSK) are enriched in basic and acidic residues. S1085 carries the post-translational modification Phosphoserine. 3 stretches are compositionally biased toward basic and acidic residues: residues 1097 to 1112 (LLEK…KPNV), 1163 to 1185 (KKCE…EEGS), and 1211 to 1220 (EEPKSEEATA). K1109 is covalently cross-linked (Glycyl lysine isopeptide (Lys-Gly) (interchain with G-Cter in SUMO2)). Residue S1179 is modified to Phosphoserine.

In Mus musculus (Mouse), this protein is G patch domain-containing protein 8 (Gpatch8).